The chain runs to 130 residues: Small ribosomal subunit protein uS9 (130 aa).

The interval 107-130 is disordered; it reads DSRKVERKKPGLKKARKASQFSKR. Positions 111–130 are enriched in basic residues; the sequence is VERKKPGLKKARKASQFSKR.

It belongs to the universal ribosomal protein uS9 family.

This is Small ribosomal subunit protein uS9 from Streptococcus sanguinis (strain SK36).